Reading from the N-terminus, the 152-residue chain is 6,7-dimethyl-8-ribityllumazine synthase (152 aa).

Residues phenylalanine 21, 55-57 (AFE), and 79-81 (AVI) contribute to the 5-amino-6-(D-ribitylamino)uracil site. 84–85 (AT) is a binding site for (2S)-2-hydroxy-3-oxobutyl phosphate. The active-site Proton donor is histidine 87. Phenylalanine 112 contributes to the 5-amino-6-(D-ribitylamino)uracil binding site. Arginine 126 lines the (2S)-2-hydroxy-3-oxobutyl phosphate pocket.

This sequence belongs to the DMRL synthase family. In terms of assembly, forms an icosahedral capsid composed of 60 subunits, arranged as a dodecamer of pentamers.

It catalyses the reaction (2S)-2-hydroxy-3-oxobutyl phosphate + 5-amino-6-(D-ribitylamino)uracil = 6,7-dimethyl-8-(1-D-ribityl)lumazine + phosphate + 2 H2O + H(+). The protein operates within cofactor biosynthesis; riboflavin biosynthesis; riboflavin from 2-hydroxy-3-oxobutyl phosphate and 5-amino-6-(D-ribitylamino)uracil: step 1/2. Functionally, catalyzes the formation of 6,7-dimethyl-8-ribityllumazine by condensation of 5-amino-6-(D-ribitylamino)uracil with 3,4-dihydroxy-2-butanone 4-phosphate. This is the penultimate step in the biosynthesis of riboflavin. In Exiguobacterium sibiricum (strain DSM 17290 / CCUG 55495 / CIP 109462 / JCM 13490 / 255-15), this protein is 6,7-dimethyl-8-ribityllumazine synthase.